The sequence spans 404 residues: NADH-quinone oxidoreductase subunit D 1 (404 aa).

The protein belongs to the complex I 49 kDa subunit family. In terms of assembly, NDH-1 is composed of 14 different subunits. Subunits NuoB, C, D, E, F, and G constitute the peripheral sector of the complex.

The protein resides in the cell inner membrane. It catalyses the reaction a quinone + NADH + 5 H(+)(in) = a quinol + NAD(+) + 4 H(+)(out). NDH-1 shuttles electrons from NADH, via FMN and iron-sulfur (Fe-S) centers, to quinones in the respiratory chain. The immediate electron acceptor for the enzyme in this species is believed to be ubiquinone. Couples the redox reaction to proton translocation (for every two electrons transferred, four hydrogen ions are translocated across the cytoplasmic membrane), and thus conserves the redox energy in a proton gradient. The chain is NADH-quinone oxidoreductase subunit D 1 from Sorangium cellulosum (strain So ce56) (Polyangium cellulosum (strain So ce56)).